The sequence spans 200 residues: Protein GrpE (200 aa).

Belongs to the GrpE family. As to quaternary structure, homodimer.

It is found in the cytoplasm. Its function is as follows. Participates actively in the response to hyperosmotic and heat shock by preventing the aggregation of stress-denatured proteins, in association with DnaK and GrpE. It is the nucleotide exchange factor for DnaK and may function as a thermosensor. Unfolded proteins bind initially to DnaJ; upon interaction with the DnaJ-bound protein, DnaK hydrolyzes its bound ATP, resulting in the formation of a stable complex. GrpE releases ADP from DnaK; ATP binding to DnaK triggers the release of the substrate protein, thus completing the reaction cycle. Several rounds of ATP-dependent interactions between DnaJ, DnaK and GrpE are required for fully efficient folding. This chain is Protein GrpE, found in Geobacter sulfurreducens (strain ATCC 51573 / DSM 12127 / PCA).